Consider the following 256-residue polypeptide: Fumarate reductase iron-sulfur subunit (256 aa).

A 2Fe-2S ferredoxin-type domain is found at 7–97 (MNVEVLRYNP…HMRIEPLANF (91 aa)). Y14 provides a ligand contact to a menaquinone. [2Fe-2S] cluster contacts are provided by C58, C63, C66, and C78. Residues 151–180 (LEKYRQFSMCINCGLCYAACPQFGLNPEFL) enclose the 4Fe-4S ferredoxin-type domain. C160, C163, and C166 together coordinate [4Fe-4S] cluster. C170, C216, and C222 together coordinate [3Fe-4S] cluster. Residue C226 participates in [4Fe-4S] cluster binding. A menaquinone is bound at residue 237-240 (NQGK).

This sequence belongs to the succinate dehydrogenase/fumarate reductase iron-sulfur protein family. In terms of assembly, fumarate dehydrogenase forms part of an enzyme complex containing four subunits: a flavoprotein, an iron-sulfur, and two hydrophobic anchor proteins. It depends on [2Fe-2S] cluster as a cofactor. [3Fe-4S] cluster is required as a cofactor. The cofactor is [4Fe-4S] cluster.

The protein localises to the cell inner membrane. It carries out the reaction a quinone + succinate = fumarate + a quinol. The enzyme catalyses a menaquinone + succinate = a menaquinol + fumarate. The polypeptide is Fumarate reductase iron-sulfur subunit (frdB) (Haemophilus influenzae (strain ATCC 51907 / DSM 11121 / KW20 / Rd)).